The sequence spans 706 residues: Protein kinase C theta type (706 aa).

In terms of domain architecture, C2 spans 1–107 (MSPFLRIGLS…KNNGKTEIWL (107 aa)). Residue Tyr-90 is modified to Phosphotyrosine; by LCK. The Phorbol-ester/DAG-type 1 zinc-finger motif lies at 159-209 (CHEFTATFFPQPTFCSVCHEFVWGLNKQGYQCRQCNAAIHKKCIDKVIAKC). Position 219 is a phosphothreonine; by autocatalysis (Thr-219). The segment at 231–281 (PHRFKVYNYKSPTFCEHCGTLLWGLARQGLKCDACGMNVHHRCQTKVANLC) adopts a Phorbol-ester/DAG-type 2 zinc-finger fold. A Phosphoserine modification is found at Ser-348. The region spanning 380–634 (FILHKMLGKG…RGDIRQHPLF (255 aa)) is the Protein kinase domain. ATP contacts are provided by residues 386–394 (LGKGSFGKV) and Lys-409. Asp-504 (proton acceptor) is an active-site residue. Position 538 is a phosphothreonine; by PDPK1 (Thr-538). Residues 635–706 (REINWEELER…MNPGMERLIS (72 aa)) form the AGC-kinase C-terminal domain. 3 positions are modified to phosphoserine: Ser-676, Ser-685, and Ser-695.

The protein belongs to the protein kinase superfamily. AGC Ser/Thr protein kinase family. PKC subfamily. Part of a lipid raft complex composed at least of BCL10, CARD11, MALT1 and IKBKB. Interacts with GLRX3 (via N-terminus). Interacts with ECT2. Interacts with CCDC88A/GIV; the interaction leads to phosphorylation of CCDC88A and inhibition of its guanine nucleotide exchange factor activity. Interacts with PRKCH upstream open reading frame 2; the interaction leads to inhibition of kinase activity. Interacts with CD28. The cofactor is Mg(2+). In terms of processing, autophosphorylation at Thr-219 is required for targeting to the TCR and cellular function of PRKCQ upon antigen receptor ligation. Following TCR stimulation, phosphorylated at Tyr-90 and Ser-685. In terms of tissue distribution, expressed in skeletal muscle, T-cells, megakaryoblastic cells and platelets.

The protein localises to the cytoplasm. The protein resides in the cell membrane. The enzyme catalyses L-seryl-[protein] + ATP = O-phospho-L-seryl-[protein] + ADP + H(+). It catalyses the reaction L-threonyl-[protein] + ATP = O-phospho-L-threonyl-[protein] + ADP + H(+). With respect to regulation, novel PKCs (PRKCD, PRKCE, PRKCH and PRKCQ) are calcium-insensitive, but activated by diacylglycerol (DAG) and phosphatidylserine. Three specific sites; Thr-538 (activation loop of the kinase domain), Ser-676 (turn motif) and Ser-695 (hydrophobic region), need to be phosphorylated for its full activation. Inhibited by PRKCH upstream open reading frame 2. Its function is as follows. Calcium-independent, phospholipid- and diacylglycerol (DAG)-dependent serine/threonine-protein kinase that mediates non-redundant functions in T-cell receptor (TCR) signaling, including T-cells activation, proliferation, differentiation and survival, by mediating activation of multiple transcription factors such as NF-kappa-B, JUN, NFATC1 and NFATC2. In TCR-CD3/CD28-co-stimulated T-cells, is required for the activation of NF-kappa-B and JUN, which in turn are essential for IL2 production, and participates in the calcium-dependent NFATC1 and NFATC2 transactivation. Mediates the activation of the canonical NF-kappa-B pathway (NFKB1) by direct phosphorylation of CARD11 on several serine residues, inducing CARD11 association with lipid rafts and recruitment of the BCL10-MALT1 complex, which then activates IKK complex, resulting in nuclear translocation and activation of NFKB1. May also play an indirect role in activation of the non-canonical NF-kappa-B (NFKB2) pathway. In the signaling pathway leading to JUN activation, acts by phosphorylating the mediator STK39/SPAK and may not act through MAP kinases signaling. Plays a critical role in TCR/CD28-induced NFATC1 and NFATC2 transactivation by participating in the regulation of reduced inositol 1,4,5-trisphosphate generation and intracellular calcium mobilization. After costimulation of T-cells through CD28 can phosphorylate CBLB and is required for the ubiquitination and subsequent degradation of CBLB, which is a prerequisite for the activation of TCR. During T-cells differentiation, plays an important role in the development of T-helper 2 (Th2) cells following immune and inflammatory responses, and, in the development of inflammatory autoimmune diseases, is necessary for the activation of IL17-producing Th17 cells. May play a minor role in Th1 response. Upon TCR stimulation, mediates T-cell protective survival signal by phosphorylating BAD, thus protecting T-cells from BAD-induced apoptosis, and by up-regulating BCL-X(L)/BCL2L1 levels through NF-kappa-B and JUN pathways. In platelets, regulates signal transduction downstream of the ITGA2B, CD36/GP4, F2R/PAR1 and F2RL3/PAR4 receptors, playing a positive role in 'outside-in' signaling and granule secretion signal transduction. May relay signals from the activated ITGA2B receptor by regulating the uncoupling of WASP and WIPF1, thereby permitting the regulation of actin filament nucleation and branching activity of the Arp2/3 complex. May mediate inhibitory effects of free fatty acids on insulin signaling by phosphorylating IRS1, which in turn blocks IRS1 tyrosine phosphorylation and downstream activation of the PI3K/AKT pathway. Phosphorylates MSN (moesin) in the presence of phosphatidylglycerol or phosphatidylinositol. Phosphorylates PDPK1 at 'Ser-504' and 'Ser-532' and negatively regulates its ability to phosphorylate PKB/AKT1. Phosphorylates CCDC88A/GIV and inhibits its guanine nucleotide exchange factor activity. Phosphorylates and activates LRRK1, which phosphorylates RAB proteins involved in intracellular trafficking. In Homo sapiens (Human), this protein is Protein kinase C theta type (PRKCQ).